The chain runs to 74 residues: UPF0346 protein YozE (74 aa).

The protein belongs to the UPF0346 family.

This chain is UPF0346 protein YozE (yozE), found in Bacillus subtilis (strain 168).